Here is a 1249-residue protein sequence, read N- to C-terminus: Protein transport protein Sec31A (1249 aa).

7 WD repeats span residues 4 to 47 (KEID…EIFE), 64 to 111 (SSSH…AGDK), 120 to 160 (KHTG…TPMT), 166 to 206 (QPPE…PIIK), 209 to 254 (DHSN…SPLR), 258 to 298 (NHAR…VLYE), and 301 to 342 (TNTQ…DGLR). The tract at residues 161–470 (PGAKTQPPED…IDASQTDFEK (310 aa)) is interaction with SEC13. The WD 8; interaction with SEC13 repeat unit spans residues 397–429 (SFSFGGKLVTFENVTGQPQQGAEQPRRQPVFIS). Arg423 is subject to Asymmetric dimethylarginine. A phosphoserine mark is found at Ser526 and Ser531. Lys647 is covalently cross-linked (Glycyl lysine isopeptide (Lys-Gly) (interchain with G-Cter in ubiquitin)). Disordered regions lie at residues 790-829 (QGRS…VQSQ), 842-940 (TTWS…RYPN), and 954-1123 (PHMY…PIGN). A compositionally biased stretch (polar residues) spans 796-805 (GQESSRSSYE). A Phosphoserine modification is found at Ser799. The interval 800 to 1142 (SRSSYEGQPL…TEKITKKPIP (343 aa)) is interaction with PDCD6. Positions 873 to 879 (GFIMHGN) match the ALG-2-binding site motif-2 (ABS-2) motif. Residues 898 to 908 (QPPPYPQPQPY) are compositionally biased toward pro residues. Low complexity-rich tracts occupy residues 961-970 (PASSPTSSSA) and 991-1007 (PSSS…GTPP). A compositionally biased stretch (polar residues) spans 1013–1024 (PASQRTGPQNGW). A compositionally biased stretch (low complexity) spans 1056-1074 (PGGDPQPQGLQQQPSASGP). Phosphothreonine is present on Thr1190. Residue Ser1192 is modified to Phosphoserine. Lys1246 is covalently cross-linked (Glycyl lysine isopeptide (Lys-Gly) (interchain with G-Cter in ubiquitin)).

It belongs to the WD repeat SEC31 family. As to quaternary structure, COPII is composed of at least 5 proteins: the SEC23/24 complex, the SEC13/31 complex and SAR1. SEC13 and SEC31 make a 2:2 tetramer that forms the edge element of the COPII outer coat. The tetramer self-assembles in multiple copies to form the complete polyhedral cage. Interacts (via WD 8) with SEC13. Interacts with PDCD6; interaction takes place in response to cytosolic calcium increase and leads to bridge together the BCR(KLHL12) complex and SEC31A, leading to monoubiquitination. Interacts with KLHL12. In terms of processing, monoubiquitinated by the BCR(KLHL12) E3 ubiquitin ligase complex, leading to regulate the size of COPII coats. As to expression, ubiquitously expressed.

The protein localises to the cytoplasm. Its subcellular location is the cytoplasmic vesicle. It localises to the COPII-coated vesicle membrane. It is found in the endoplasmic reticulum membrane. In terms of biological role, component of the coat protein complex II (COPII) which promotes the formation of transport vesicles from the endoplasmic reticulum (ER). The coat has two main functions, the physical deformation of the endoplasmic reticulum membrane into vesicles and the selection of cargo molecules. The polypeptide is Protein transport protein Sec31A (Sec31a) (Rattus norvegicus (Rat)).